The sequence spans 113 residues: Large ribosomal subunit protein bL19 (113 aa).

Belongs to the bacterial ribosomal protein bL19 family.

Its function is as follows. This protein is located at the 30S-50S ribosomal subunit interface and may play a role in the structure and function of the aminoacyl-tRNA binding site. This chain is Large ribosomal subunit protein bL19, found in Corynebacterium efficiens (strain DSM 44549 / YS-314 / AJ 12310 / JCM 11189 / NBRC 100395).